The following is a 100-amino-acid chain: Urease subunit gamma (100 aa).

It belongs to the urease gamma subunit family. In terms of assembly, heterotrimer of UreA (gamma), UreB (beta) and UreC (alpha) subunits. Three heterotrimers associate to form the active enzyme.

It is found in the cytoplasm. It catalyses the reaction urea + 2 H2O + H(+) = hydrogencarbonate + 2 NH4(+). Its pathway is nitrogen metabolism; urea degradation; CO(2) and NH(3) from urea (urease route): step 1/1. In Corynebacterium efficiens (strain DSM 44549 / YS-314 / AJ 12310 / JCM 11189 / NBRC 100395), this protein is Urease subunit gamma.